A 441-amino-acid polypeptide reads, in one-letter code: UBX domain-containing protein 6 (441 aa).

The interval 1–10 is mediates interaction with LMAN1; it reads MKKFFQEIKA. 3 disordered regions span residues 12–57, 62–81, and 86–113; these read IKFK…MAAA, RLEQ…SIRN, and ELRA…EEGS. The segment covering 27 to 36 has biased composition (basic and acidic residues); it reads VGEKAPKEKP. The interval 51–63 is VCP/p97-interacting motif (VIM); it reads EAQMAAAAALARL. The PUB domain maps to 175 to 244; it reads VDTIAKYLDN…GPEEFYVLSE (70 aa). Positions 332–408 constitute a UBX domain; that stretch reads RKYTYTLLRV…GLVPSALLTF (77 aa).

As to quaternary structure, interacts with VCP through the PUB domain (via C-terminus) and VIM motif (via N-terminus); the interaction is direct. Forms a ternary complex with CAV1 and VCP. Interacts with SYVN1. Interacts with HERPUD1. Interacts with VCPKMT. May interact with DERL1. Interacts with PLAA, VCP and YOD1; may form a complex involved in macroautophagy. Interacts with LMAN1.

The protein localises to the cytoplasm. The protein resides in the cytosol. Its subcellular location is the membrane. It is found in the nucleus. It localises to the cytoskeleton. The protein localises to the microtubule organizing center. The protein resides in the centrosome. Its subcellular location is the early endosome membrane. It is found in the late endosome membrane. It localises to the lysosome membrane. May negatively regulate the ATPase activity of VCP, an ATP-driven segregase that associates with different cofactors to control a wide variety of cellular processes. As a cofactor of VCP, it may play a role in the transport of CAV1 to lysosomes for degradation. It may also play a role in endoplasmic reticulum-associated degradation (ERAD) of misfolded proteins. Together with VCP and other cofactors, it may play a role in macroautophagy, regulating for instance the clearance of damaged lysosomes. In Bos taurus (Bovine), this protein is UBX domain-containing protein 6.